A 360-amino-acid polypeptide reads, in one-letter code: uncharacterized protein (360 aa).

Residues 22–32 (EEDVEPNEEAE) are compositionally biased toward acidic residues. Residues 22–55 (EEDVEPNEEAEGPGGVHKKRRGARKKNRRQRMEG) are disordered. Residues 37–50 (VHKKRRGARKKNRR) are compositionally biased toward basic residues.

This is an uncharacterized protein from Caenorhabditis elegans.